The following is a 478-amino-acid chain: UBP1-associated protein 2A (478 aa).

Positions 1–99 are disordered; it reads MTKKRKLEGE…NQEDDDDEPI (99 aa). Residues 41–75 are compositionally biased toward acidic residues; it reads GDVEEVEYEEVEEEQEEEVEDDDDEDDGDENEDQT. RRM domains follow at residues 140–217 and 245–328; these read RKIF…LASK and KKIY…KPGK. Disordered stretches follow at residues 321 to 359 and 442 to 478; these read IDGP…GGHG and GTQP…YMGH. A compositionally biased stretch (low complexity) spans 442–456; sequence GTQPGLQGGYQTPQP. Residues 457 to 470 are compositionally biased toward gly residues; the sequence is GQGGTSRGQHGVGP.

As to quaternary structure, interacts with UBA1A, UBA2A, UBP1A, UBP1B, UBP1C and SRK2E. As to expression, expressed in young leaves, flowers and embryos.

It localises to the nucleus. In terms of biological role, heterogeneous nuclear ribonucleoprotein (hnRNP)-like protein that acts as a component of a complex regulating the turnover of mRNAs in the nucleus. Binds with high affinity to RNA molecules that contain U-rich sequences in 3'-UTRs. May function in complex with UBP1 and contribute to the stabilization of mRNAs in the nucleus. However, unlike UBP1, UBA2A does not stimulate pre-mRNA splicing. In Arabidopsis thaliana (Mouse-ear cress), this protein is UBP1-associated protein 2A (UBA2A).